We begin with the raw amino-acid sequence, 201 residues long: Translation machinery-associated protein 22 (201 aa).

Residues 94-165 form the SUI1 domain; that stretch reads VTIKRIERNK…EARAYIEKLL (72 aa).

It belongs to the DENR family. In terms of assembly, interacts with the 40S ribosomal subunit.

It localises to the cytoplasm. This Meyerozyma guilliermondii (strain ATCC 6260 / CBS 566 / DSM 6381 / JCM 1539 / NBRC 10279 / NRRL Y-324) (Yeast) protein is Translation machinery-associated protein 22 (TMA22).